The following is a 128-amino-acid chain: Adrenodoxin (128 aa).

Position 3 is a phosphoserine (Ser-3). An N6-acetyllysine; alternate modification is found at Lys-6. Lys-6 carries the N6-succinyllysine; alternate modification. The region spanning 7–111 is the 2Fe-2S ferredoxin-type domain; that stretch reads VTVNFINRDG…NMTVRVPDAV (105 aa). Cys-46, Cys-52, Cys-55, and Cys-92 together coordinate [2Fe-2S] cluster. Residue Lys-98 is modified to N6-succinyllysine. Ser-117 bears the Phosphoserine mark.

The protein belongs to the adrenodoxin/putidaredoxin family. As to quaternary structure, interacts with CYP11A1. [2Fe-2S] cluster serves as cofactor.

It is found in the mitochondrion matrix. Essential for the synthesis of various steroid hormones. Participates in the reduction of mitochondrial cytochrome P450 for steroidogenesis. Transfers electrons from adrenodoxin reductase to CYP11A1, a cytochrome P450 that catalyzes cholesterol side-chain cleavage. Does not form a ternary complex with adrenodoxin reductase and CYP11A1 but shuttles between the two enzymes to transfer electrons. The chain is Adrenodoxin (FDX1) from Ovis aries (Sheep).